Reading from the N-terminus, the 210-residue chain is Large ribosomal subunit protein uL3 (210 aa).

Residues Ala133–Thr152 form a disordered region. Gln151 carries the post-translational modification N5-methylglutamine.

The protein belongs to the universal ribosomal protein uL3 family. As to quaternary structure, part of the 50S ribosomal subunit. Forms a cluster with proteins L14 and L19. Post-translationally, methylated by PrmB.

In terms of biological role, one of the primary rRNA binding proteins, it binds directly near the 3'-end of the 23S rRNA, where it nucleates assembly of the 50S subunit. This Francisella philomiragia subsp. philomiragia (strain ATCC 25017 / CCUG 19701 / FSC 153 / O#319-036) protein is Large ribosomal subunit protein uL3.